The primary structure comprises 322 residues: Sulfate adenylyltransferase subunit 2 (322 aa).

The protein belongs to the PAPS reductase family. CysD subfamily. As to quaternary structure, heterodimer composed of CysD, the smaller subunit, and CysN.

It catalyses the reaction sulfate + ATP + H(+) = adenosine 5'-phosphosulfate + diphosphate. It participates in sulfur metabolism; hydrogen sulfide biosynthesis; sulfite from sulfate: step 1/3. With CysN forms the ATP sulfurylase (ATPS) that catalyzes the adenylation of sulfate producing adenosine 5'-phosphosulfate (APS) and diphosphate, the first enzymatic step in sulfur assimilation pathway. APS synthesis involves the formation of a high-energy phosphoric-sulfuric acid anhydride bond driven by GTP hydrolysis by CysN coupled to ATP hydrolysis by CysD. This chain is Sulfate adenylyltransferase subunit 2, found in Bradyrhizobium sp. (strain BTAi1 / ATCC BAA-1182).